The chain runs to 1287 residues: DENN domain-containing protein 5A (1287 aa).

The 203-residue stretch at 57–259 (STTEGENFEQ…EVPLPPPGRS (203 aa)) folds into the uDENN domain. Phosphoserine is present on Ser-193. In terms of domain architecture, cDENN spans 278-414 (ELPLFDFPVK…LEFVQEVSEI (137 aa)). Positions 416–598 (MAFGVPPEGN…IMCHDDDDKD (183 aa)) constitute a dDENN domain. Positions 787-950 (VEENTLIASL…DYFCFTNVFT (164 aa)) constitute an RUN 1 domain. The PLAT domain maps to 954–1062 (IPYHILIVPS…DDGSLERVLV (109 aa)). Thr-1079 is subject to Phosphothreonine. Ser-1085, Ser-1087, and Ser-1096 each carry phosphoserine. The region spanning 1134-1280 (TLLLCGECGL…QEFNITLDTS (147 aa)) is the RUN 2 domain.

Belongs to the RAB6IP1 family. In terms of assembly, interacts with RAB6A bound to GTP. Expressed in developing brain and developing neurons.

It localises to the golgi apparatus membrane. Its function is as follows. Guanine nucleotide exchange factor (GEF) which may activate RAB6A and RAB39A and/or RAB39B. Promotes the exchange of GDP to GTP, converting inactive GDP-bound Rab proteins into their active GTP-bound form. Involved in the negative regulation of neurite outgrowth. The chain is DENN domain-containing protein 5A (Dennd5a) from Rattus norvegicus (Rat).